We begin with the raw amino-acid sequence, 161 residues long: S-ribosylhomocysteine lyase (161 aa).

Fe cation is bound by residues H57, H61, and C127.

Belongs to the LuxS family. As to quaternary structure, homodimer. Fe cation serves as cofactor.

It catalyses the reaction S-(5-deoxy-D-ribos-5-yl)-L-homocysteine = (S)-4,5-dihydroxypentane-2,3-dione + L-homocysteine. Its function is as follows. Involved in the synthesis of autoinducer 2 (AI-2) which is secreted by bacteria and is used to communicate both the cell density and the metabolic potential of the environment. The regulation of gene expression in response to changes in cell density is called quorum sensing. Catalyzes the transformation of S-ribosylhomocysteine (RHC) to homocysteine (HC) and 4,5-dihydroxy-2,3-pentadione (DPD). The polypeptide is S-ribosylhomocysteine lyase (Streptococcus equi subsp. equi (strain 4047)).